A 227-amino-acid chain; its full sequence is Enolase-phosphatase E1 (227 aa).

Residues D11 and E13 each contribute to the Mg(2+) site. Residues 118-119 and K161 contribute to the substrate site; that span reads SS. D186 is a binding site for Mg(2+).

This sequence belongs to the HAD-like hydrolase superfamily. MasA/MtnC family. As to quaternary structure, monomer. The cofactor is Mg(2+).

Its subcellular location is the cytoplasm. The protein localises to the nucleus. The catalysed reaction is 5-methylsulfanyl-2,3-dioxopentyl phosphate + H2O = 1,2-dihydroxy-5-(methylsulfanyl)pent-1-en-3-one + phosphate. It participates in amino-acid biosynthesis; L-methionine biosynthesis via salvage pathway; L-methionine from S-methyl-5-thio-alpha-D-ribose 1-phosphate: step 3/6. Its pathway is amino-acid biosynthesis; L-methionine biosynthesis via salvage pathway; L-methionine from S-methyl-5-thio-alpha-D-ribose 1-phosphate: step 4/6. Bifunctional enzyme that catalyzes the enolization of 2,3-diketo-5-methylthiopentyl-1-phosphate (DK-MTP-1-P) into the intermediate 2-hydroxy-3-keto-5-methylthiopentenyl-1-phosphate (HK-MTPenyl-1-P), which is then dephosphorylated to form the acireductone 1,2-dihydroxy-3-keto-5-methylthiopentene (DHK-MTPene). The protein is Enolase-phosphatase E1 of Saccharomyces cerevisiae (strain YJM789) (Baker's yeast).